Here is a 202-residue protein sequence, read N- to C-terminus: ATP-dependent Clp protease proteolytic subunit (202 aa).

S106 acts as the Nucleophile in catalysis. Residue H131 is part of the active site.

It belongs to the peptidase S14 family. As to quaternary structure, fourteen ClpP subunits assemble into 2 heptameric rings which stack back to back to give a disk-like structure with a central cavity, resembling the structure of eukaryotic proteasomes.

The protein resides in the cytoplasm. The enzyme catalyses Hydrolysis of proteins to small peptides in the presence of ATP and magnesium. alpha-casein is the usual test substrate. In the absence of ATP, only oligopeptides shorter than five residues are hydrolyzed (such as succinyl-Leu-Tyr-|-NHMec, and Leu-Tyr-Leu-|-Tyr-Trp, in which cleavage of the -Tyr-|-Leu- and -Tyr-|-Trp bonds also occurs).. In terms of biological role, cleaves peptides in various proteins in a process that requires ATP hydrolysis. Has a chymotrypsin-like activity. Plays a major role in the degradation of misfolded proteins. The protein is ATP-dependent Clp protease proteolytic subunit of Shewanella sp. (strain W3-18-1).